The primary structure comprises 59 residues: Photosystem II reaction center protein K (59 aa).

A propeptide spanning residues 1 to 22 (MLNIFSLIGLNSALYSSSCFFA) is cleaved from the precursor. A helical membrane pass occupies residues 30-50 (FLSPIVDFMPVIPLLFFLLAF).

Belongs to the PsbK family. As to quaternary structure, PSII is composed of 1 copy each of membrane proteins PsbA, PsbB, PsbC, PsbD, PsbE, PsbF, PsbH, PsbI, PsbJ, PsbK, PsbL, PsbM, PsbT, PsbX, PsbY, PsbZ, Psb30/Ycf12, at least 3 peripheral proteins of the oxygen-evolving complex and a large number of cofactors. It forms dimeric complexes.

It localises to the plastid. The protein localises to the chloroplast thylakoid membrane. One of the components of the core complex of photosystem II (PSII). PSII is a light-driven water:plastoquinone oxidoreductase that uses light energy to abstract electrons from H(2)O, generating O(2) and a proton gradient subsequently used for ATP formation. It consists of a core antenna complex that captures photons, and an electron transfer chain that converts photonic excitation into a charge separation. This is Photosystem II reaction center protein K from Silene latifolia (White campion).